The chain runs to 618 residues: Leucine aminopeptidase 2 (618 aa).

A peptide-binding positions include 140–142 (QCQ) and 272–277 (PYGGME). Residue H301 participates in Zn(2+) binding. The active-site Proton acceptor is E302. The Zn(2+) site is built by H305 and E324. Y389 acts as the Proton donor in catalysis.

Belongs to the peptidase M1 family. Zn(2+) serves as cofactor.

It is found in the cytoplasm. Its subcellular location is the nucleus. It carries out the reaction an epoxide + H2O = an ethanediol. In terms of biological role, aminopeptidase that preferentially cleaves di- and tripeptides. Also has low epoxide hydrolase activity (in vitro). Can hydrolyze the epoxide leukotriene LTA(4) but it forms preferentially 5,6-dihydroxy-7,9,11,14-eicosatetraenoic acid rather than the cytokine leukotriene B(4) as the product compared to the homologous mammalian enzyme (in vitro). The protein is Leucine aminopeptidase 2 of Emericella nidulans (strain FGSC A4 / ATCC 38163 / CBS 112.46 / NRRL 194 / M139) (Aspergillus nidulans).